The following is a 314-amino-acid chain: 4-hydroxy-3-methylbut-2-enyl diphosphate reductase (314 aa).

C12 contributes to the [4Fe-4S] cluster binding site. (2E)-4-hydroxy-3-methylbut-2-enyl diphosphate-binding residues include H41 and H74. Residues H41 and H74 each contribute to the dimethylallyl diphosphate site. 2 residues coordinate isopentenyl diphosphate: H41 and H74. Residue C96 coordinates [4Fe-4S] cluster. H124 provides a ligand contact to (2E)-4-hydroxy-3-methylbut-2-enyl diphosphate. H124 lines the dimethylallyl diphosphate pocket. Position 124 (H124) interacts with isopentenyl diphosphate. E126 (proton donor) is an active-site residue. T167 contacts (2E)-4-hydroxy-3-methylbut-2-enyl diphosphate. C197 contacts [4Fe-4S] cluster. (2E)-4-hydroxy-3-methylbut-2-enyl diphosphate is bound by residues S225, S226, N227, and S269. The dimethylallyl diphosphate site is built by S225, S226, N227, and S269. Positions 225, 226, 227, and 269 each coordinate isopentenyl diphosphate.

It belongs to the IspH family. [4Fe-4S] cluster is required as a cofactor.

It carries out the reaction isopentenyl diphosphate + 2 oxidized [2Fe-2S]-[ferredoxin] + H2O = (2E)-4-hydroxy-3-methylbut-2-enyl diphosphate + 2 reduced [2Fe-2S]-[ferredoxin] + 2 H(+). The enzyme catalyses dimethylallyl diphosphate + 2 oxidized [2Fe-2S]-[ferredoxin] + H2O = (2E)-4-hydroxy-3-methylbut-2-enyl diphosphate + 2 reduced [2Fe-2S]-[ferredoxin] + 2 H(+). Its pathway is isoprenoid biosynthesis; dimethylallyl diphosphate biosynthesis; dimethylallyl diphosphate from (2E)-4-hydroxy-3-methylbutenyl diphosphate: step 1/1. It participates in isoprenoid biosynthesis; isopentenyl diphosphate biosynthesis via DXP pathway; isopentenyl diphosphate from 1-deoxy-D-xylulose 5-phosphate: step 6/6. In terms of biological role, catalyzes the conversion of 1-hydroxy-2-methyl-2-(E)-butenyl 4-diphosphate (HMBPP) into a mixture of isopentenyl diphosphate (IPP) and dimethylallyl diphosphate (DMAPP). Acts in the terminal step of the DOXP/MEP pathway for isoprenoid precursor biosynthesis. This chain is 4-hydroxy-3-methylbut-2-enyl diphosphate reductase, found in Actinobacillus pleuropneumoniae serotype 3 (strain JL03).